Reading from the N-terminus, the 353-residue chain is MTAIRPGSVTFENVTKKFGNFTALPNLSLTVEPGTLVTLLGPSGCGKTTTLRLLAGLEHPTSGRILVGGKDVTNLPANERDVSMVFQSYALFPHMTSLENVAYGLESSGFKKNEARERAEEGLKLVGLGGMGHRLPAELSGGQQQRVAVARALVLEPQVLLLDEPLSNLDARLRRRVRTEIRELQQRLGFTADYVTHDQDEALAVSDTIIVMKEGGIAQKGSPRDLYEAPASAFIADFMGEANVVPCEVISAENGEAVIRVAGLTHRVPARNAQPRPAQLAIRPNAVTLQPQAGGGFSGTVAHSAYLGDHIEYEIETEHGKLFIVDPAVEQSLPLQTDVSIQFKTRGLAIINQ.

In terms of domain architecture, ABC transporter spans 9-239; it reads VTFENVTKKF…PASAFIADFM (231 aa). 41 to 48 provides a ligand contact to ATP; that stretch reads GPSGCGKT.

This sequence belongs to the ABC transporter superfamily. Fe(3+) ion importer (TC 3.A.1.10) family. In terms of assembly, the complex is composed of two ATP-binding proteins (FbpC), two transmembrane proteins (FbpB) and a solute-binding protein (FbpA).

The protein localises to the cell inner membrane. The enzyme catalyses Fe(3+)(out) + ATP + H2O = Fe(3+)(in) + ADP + phosphate + H(+). Its function is as follows. Part of the ABC transporter complex FbpABC involved in Fe(3+) ions import. Responsible for energy coupling to the transport system. This chain is Fe(3+) ions import ATP-binding protein FbpC, found in Brucella suis biovar 1 (strain 1330).